Here is a 712-residue protein sequence, read N- to C-terminus: Phosphomethylpyrimidine synthase (712 aa).

The segment at 14 to 49 is disordered; sequence AIDITAPESTIPNKSKVPNKSAESSQSTVPKAPSRR. A compositionally biased stretch (polar residues) spans 20–42; that stretch reads PESTIPNKSKVPNKSAESSQSTV. Substrate-binding positions include Asn283, Met312, Tyr341, His377, 397–399, 438–441, and Glu477; these read SRG and DGMR. His481 contacts Zn(2+). Tyr504 is a substrate binding site. His545 is a Zn(2+) binding site. [4Fe-4S] cluster contacts are provided by Cys625, Cys628, and Cys633.

It belongs to the ThiC family. Homodimer. The cofactor is [4Fe-4S] cluster.

The catalysed reaction is 5-amino-1-(5-phospho-beta-D-ribosyl)imidazole + S-adenosyl-L-methionine = 4-amino-2-methyl-5-(phosphooxymethyl)pyrimidine + CO + 5'-deoxyadenosine + formate + L-methionine + 3 H(+). Its pathway is cofactor biosynthesis; thiamine diphosphate biosynthesis. Catalyzes the synthesis of the hydroxymethylpyrimidine phosphate (HMP-P) moiety of thiamine from aminoimidazole ribotide (AIR) in a radical S-adenosyl-L-methionine (SAM)-dependent reaction. The protein is Phosphomethylpyrimidine synthase of Shewanella putrefaciens (strain CN-32 / ATCC BAA-453).